The chain runs to 263 residues: Outer membrane lipoprotein 3 (263 aa).

The N-terminal stretch at Met-1–Ala-19 is a signal peptide. Residue Cys-20 is the site of N-palmitoyl cysteine attachment. The S-diacylglycerol cysteine moiety is linked to residue Cys-20.

This sequence belongs to the NlpA lipoprotein family.

The protein localises to the cell outer membrane. In Mannheimia haemolytica (Pasteurella haemolytica), this protein is Outer membrane lipoprotein 3 (plpC).